A 188-amino-acid chain; its full sequence is V-type proton ATPase subunit E (188 aa).

The protein belongs to the V-ATPase E subunit family.

Produces ATP from ADP in the presence of a proton gradient across the membrane. The polypeptide is V-type proton ATPase subunit E (Dictyoglomus turgidum (strain DSM 6724 / Z-1310)).